The primary structure comprises 261 residues: Probable septum site-determining protein MinC (261 aa).

Belongs to the MinC family. As to quaternary structure, interacts with MinD and FtsZ.

Cell division inhibitor that blocks the formation of polar Z ring septums. Rapidly oscillates between the poles of the cell to destabilize FtsZ filaments that have formed before they mature into polar Z rings. Prevents FtsZ polymerization. This chain is Probable septum site-determining protein MinC, found in Burkholderia cenocepacia (strain ATCC BAA-245 / DSM 16553 / LMG 16656 / NCTC 13227 / J2315 / CF5610) (Burkholderia cepacia (strain J2315)).